The primary structure comprises 67 residues: Large ribosomal subunit protein bL31 (67 aa).

It belongs to the bacterial ribosomal protein bL31 family. Type A subfamily. As to quaternary structure, part of the 50S ribosomal subunit.

Binds the 23S rRNA. The protein is Large ribosomal subunit protein bL31 of Finegoldia magna (strain ATCC 29328 / DSM 20472 / WAL 2508) (Peptostreptococcus magnus).